An 864-amino-acid polypeptide reads, in one-letter code: Leucine--tRNA ligase (864 aa).

The short motif at Pro-40–His-51 is the 'HIGH' region element. Positions Lys-636–Ser-640 match the 'KMSKS' region motif. Position 639 (Lys-639) interacts with ATP.

It belongs to the class-I aminoacyl-tRNA synthetase family.

It localises to the cytoplasm. It carries out the reaction tRNA(Leu) + L-leucine + ATP = L-leucyl-tRNA(Leu) + AMP + diphosphate. The protein is Leucine--tRNA ligase of Leptospira borgpetersenii serovar Hardjo-bovis (strain JB197).